The primary structure comprises 357 residues: 3-dehydroquinate synthase (357 aa).

NAD(+) contacts are provided by residues 104–108 (GVVGD), 128–129 (TT), Lys-141, and 168–171 (FLET). Zn(2+) contacts are provided by Glu-183, His-243, and His-260.

It belongs to the sugar phosphate cyclases superfamily. Dehydroquinate synthase family. NAD(+) is required as a cofactor. Co(2+) serves as cofactor. It depends on Zn(2+) as a cofactor.

Its subcellular location is the cytoplasm. It carries out the reaction 7-phospho-2-dehydro-3-deoxy-D-arabino-heptonate = 3-dehydroquinate + phosphate. The protein operates within metabolic intermediate biosynthesis; chorismate biosynthesis; chorismate from D-erythrose 4-phosphate and phosphoenolpyruvate: step 2/7. Functionally, catalyzes the conversion of 3-deoxy-D-arabino-heptulosonate 7-phosphate (DAHP) to dehydroquinate (DHQ). The polypeptide is 3-dehydroquinate synthase (Streptococcus pyogenes serotype M6 (strain ATCC BAA-946 / MGAS10394)).